A 520-amino-acid polypeptide reads, in one-letter code: GMP synthase [glutamine-hydrolyzing] (520 aa).

Residues 12–205 form the Glutamine amidotransferase type-1 domain; sequence KIIVLDYGSQ…AISICGARGD (194 aa). The Nucleophile role is filled by Cys89. Active-site residues include His179 and Glu181. The region spanning 206–395 is the GMPS ATP-PPase domain; the sequence is WSMDNFIDME…LGMPEEIVWR (190 aa). Residue 233 to 239 coordinates ATP; it reads SGGVDSS.

In terms of assembly, homodimer.

The catalysed reaction is XMP + L-glutamine + ATP + H2O = GMP + L-glutamate + AMP + diphosphate + 2 H(+). Its pathway is purine metabolism; GMP biosynthesis; GMP from XMP (L-Gln route): step 1/1. In terms of biological role, catalyzes the synthesis of GMP from XMP. This Streptococcus pyogenes serotype M6 (strain ATCC BAA-946 / MGAS10394) protein is GMP synthase [glutamine-hydrolyzing].